Consider the following 131-residue polypeptide: uncharacterized protein (131 aa).

Positions 1 to 16 (MDVLFVAIFAVPLILG) are cleaved as a signal peptide.

The protein resides in the secreted. This is an uncharacterized protein from Homo sapiens (Human).